The chain runs to 238 residues: Flagellar L-ring protein (238 aa).

A signal peptide spans Met1 to Ser23. Residue Cys24 is the site of N-palmitoyl cysteine attachment. A lipid anchor (S-diacylglycerol cysteine) is attached at Cys24.

Belongs to the FlgH family. The basal body constitutes a major portion of the flagellar organelle and consists of four rings (L,P,S, and M) mounted on a central rod.

The protein localises to the cell outer membrane. Its subcellular location is the bacterial flagellum basal body. Its function is as follows. Assembles around the rod to form the L-ring and probably protects the motor/basal body from shearing forces during rotation. The protein is Flagellar L-ring protein of Buchnera aphidicola subsp. Acyrthosiphon pisum (strain 5A).